The following is a 1287-amino-acid chain: DNA-directed RNA polymerase subunit beta (1287 aa).

This sequence belongs to the RNA polymerase beta chain family. As to quaternary structure, the RNAP catalytic core consists of 2 alpha, 1 beta, 1 beta' and 1 omega subunit. When a sigma factor is associated with the core the holoenzyme is formed, which can initiate transcription.

The enzyme catalyses RNA(n) + a ribonucleoside 5'-triphosphate = RNA(n+1) + diphosphate. In terms of biological role, DNA-dependent RNA polymerase catalyzes the transcription of DNA into RNA using the four ribonucleoside triphosphates as substrates. This Salinibacter ruber (strain DSM 13855 / M31) protein is DNA-directed RNA polymerase subunit beta.